Reading from the N-terminus, the 291-residue chain is Cilia- and flagella-associated protein 298 (291 aa).

Belongs to the CFAP298 family.

The sequence is that of Cilia- and flagella-associated protein 298 from Drosophila melanogaster (Fruit fly).